Here is a 321-residue protein sequence, read N- to C-terminus: Coproporphyrin III ferrochelatase (321 aa).

His185 and Glu267 together coordinate Fe(2+).

The protein belongs to the ferrochelatase family.

Its subcellular location is the cytoplasm. The enzyme catalyses Fe-coproporphyrin III + 2 H(+) = coproporphyrin III + Fe(2+). It functions in the pathway porphyrin-containing compound metabolism; protoheme biosynthesis. In terms of biological role, involved in coproporphyrin-dependent heme b biosynthesis. Catalyzes the insertion of ferrous iron into coproporphyrin III to form Fe-coproporphyrin III. The sequence is that of Coproporphyrin III ferrochelatase from Lacticaseibacillus casei (strain BL23) (Lactobacillus casei).